Reading from the N-terminus, the 164-residue chain is UPF0305 protein MJ0646 (164 aa).

The protein belongs to the UPF0305 family.

In Methanocaldococcus jannaschii (strain ATCC 43067 / DSM 2661 / JAL-1 / JCM 10045 / NBRC 100440) (Methanococcus jannaschii), this protein is UPF0305 protein MJ0646.